The primary structure comprises 61 residues: L-amino-acid oxidase (61 aa).

Position 43-44 (43-44) interacts with FAD; sequence MA.

This sequence belongs to the flavin monoamine oxidase family. FIG1 subfamily. In terms of assembly, homodimer; non-covalently linked. Requires FAD as cofactor. Post-translationally, N-glycosylated. As to expression, expressed by the venom gland.

It is found in the secreted. It catalyses the reaction an L-alpha-amino acid + O2 + H2O = a 2-oxocarboxylate + H2O2 + NH4(+). The catalysed reaction is L-leucine + O2 + H2O = 4-methyl-2-oxopentanoate + H2O2 + NH4(+). Catalyzes an oxidative deamination of predominantly hydrophobic and aromatic L-amino acids, thus producing hydrogen peroxide that may contribute to the diverse toxic effects of this enzyme. Shows activity on L-Leu. Exhibits diverse biological activities, such as apoptosis, antibacterial activities against both Gram-negative and Gram-positive bacteria and antiparasitic activities, as well as induction of platelet aggregation. Effects of snake L-amino oxidases on platelets are controversial, since they either induce aggregation or inhibit agonist-induced aggregation. These different effects are probably due to different experimental conditions. This protein may also induce hemorrhage, hemolysis, and edema. The protein is L-amino-acid oxidase of Crotalus durissus cascavella (Northeastern Brazilian rattlesnake).